We begin with the raw amino-acid sequence, 439 residues long: MDSREIHHQQQQQQQQQQQQQQQQQHLQQQQQPPPGMLMSHHNSYNRNPNAAAAVLMGHNTSTSQAMHQRLPFGGSMSPHQPQQHQYHHPQPQQQIDQKTLESLGFDGSPSSVAATQQHSMRFGIDHQQVKKKRGRPRKYAADGGGGGGGGSNIALGLAPTSPLPSASNSYGGGNEGGGGGDSAGANANSSDPPAKRNRGRPPGSGKKQLDALGGTGGVGFTPHVIEVKTGEDIATKILAFTNQGPRAICILSATGAVTNVMLRQANNSNPTGTVKYEGRFEIISLSGSFLNSESNGTVTKTGNLSVSLAGHEGRIVGGCVDGMLVAGSQVQVIVGSFVPDGRKQKQSAGRAQNTPEPASAPANMLSFGGVGGPGSPRSQGQQHSSESSEENESNSPLHRRSNNNNSNNHGIFGNSTPQPLHQIPMQMYQNLWPGNSPQ.

Disordered stretches follow at residues 1-46 (MDSR…NSYN), 69-216 (QRLP…LGGT), and 342-439 (GRKQ…NSPQ). 2 stretches are compositionally biased toward low complexity: residues 9–31 (QQQQ…QQQQ) and 79–95 (PHQP…PQQQ). A compositionally biased stretch (polar residues) spans 109-120 (SPSSVAATQQHS). The span at 130-139 (VKKKRGRPRK) shows a compositional bias: basic residues. A Bipartite nuclear localization signal motif is present at residues 131 to 139 (KKKRGRPRK). The a.T hook 1 DNA-binding region spans 131 to 143 (KKKRGRPRKYAAD). Gly residues-rich tracts occupy residues 143–152 (DGGGGGGGGS) and 171–183 (YGGG…GGDS). The segment at residues 196 to 208 (KRNRGRPPGSGKK) is a DNA-binding region (a.T hook 2). The 143-residue stretch at 217–359 (GGVGFTPHVI…GRAQNTPEPA (143 aa)) folds into the PPC domain. The span at 347-357 (QSAGRAQNTPE) shows a compositional bias: polar residues. 2 stretches are compositionally biased toward low complexity: residues 376 to 386 (SPRSQGQQHSS) and 403 to 416 (NNNN…FGNS). The span at 428–439 (MYQNLWPGNSPQ) shows a compositional bias: polar residues.

The protein localises to the nucleus. Functionally, transcription factor that specifically binds AT-rich DNA sequences related to the nuclear matrix attachment regions (MARs). In Arabidopsis thaliana (Mouse-ear cress), this protein is AT-hook motif nuclear-localized protein 13.